The sequence spans 124 residues: Ribonuclease pancreatic (124 aa).

The segment covering 1-13 has biased composition (basic and acidic residues); the sequence is SETAAEKFERQHM. The interval 1–23 is disordered; the sequence is SETAAEKFERQHMDSYSSSSSNS. Lys7 and Arg10 together coordinate substrate. The Proton acceptor role is filled by His12. Disulfide bonds link Cys26–Cys84, Cys40–Cys95, Cys58–Cys110, and Cys65–Cys72. Residues 41-45, Lys66, and Arg85 each bind substrate; that span reads KPVNT. The active-site Proton donor is the His119.

Belongs to the pancreatic ribonuclease family. Monomer. Interacts with and forms tight 1:1 complexes with RNH1. Dimerization of two such complexes may occur. Interaction with RNH1 inhibits this protein. As to expression, pancreas.

It is found in the secreted. The catalysed reaction is an [RNA] containing cytidine + H2O = an [RNA]-3'-cytidine-3'-phosphate + a 5'-hydroxy-ribonucleotide-3'-[RNA].. It carries out the reaction an [RNA] containing uridine + H2O = an [RNA]-3'-uridine-3'-phosphate + a 5'-hydroxy-ribonucleotide-3'-[RNA].. Functionally, endonuclease that catalyzes the cleavage of RNA on the 3' side of pyrimidine nucleotides. Acts on single-stranded and double-stranded RNA. In Camelus bactrianus (Bactrian camel), this protein is Ribonuclease pancreatic (RNASE1).